Here is a 310-residue protein sequence, read N- to C-terminus: Ribosomal RNA small subunit methyltransferase H (310 aa).

Residues 33–35 (AGH), aspartate 53, phenylalanine 79, aspartate 100, and glutamine 107 each bind S-adenosyl-L-methionine.

Belongs to the methyltransferase superfamily. RsmH family.

It localises to the cytoplasm. The catalysed reaction is cytidine(1402) in 16S rRNA + S-adenosyl-L-methionine = N(4)-methylcytidine(1402) in 16S rRNA + S-adenosyl-L-homocysteine + H(+). In terms of biological role, specifically methylates the N4 position of cytidine in position 1402 (C1402) of 16S rRNA. This Desulfitobacterium hafniense (strain DSM 10664 / DCB-2) protein is Ribosomal RNA small subunit methyltransferase H.